An 80-amino-acid polypeptide reads, in one-letter code: Dermaseptin-DA3 (80 aa).

The first 22 residues, 1-22, serve as a signal peptide directing secretion; the sequence is MAFLKKSLFLVLFLGLVSLSIC. Positions 23–42 are excised as a propeptide; that stretch reads EEKRENEDEEEQEDDEQSEE. Residues 24–48 are disordered; the sequence is EKRENEDEEEQEDDEQSEEKRGMWS. Residues 29–40 show a composition bias toward acidic residues; the sequence is EDEEEQEDDEQS. Leu-77 carries the leucine amide modification. Positions 79-80 are excised as a propeptide; it reads EQ.

The protein belongs to the frog skin active peptide (FSAP) family. Dermaseptin subfamily. In terms of tissue distribution, expressed by the skin glands.

It localises to the secreted. Its function is as follows. Possesses a potent antimicrobial activity against Gram-positive and Gram-negative bacteria. Probably acts by disturbing membrane functions with its amphipathic structure. The sequence is that of Dermaseptin-DA3 from Agalychnis dacnicolor (Giant Mexican leaf frog).